Here is a 302-residue protein sequence, read N- to C-terminus: Putative S-adenosyl-L-methionine-dependent methyltransferase MAB_4586c (302 aa).

S-adenosyl-L-methionine is bound by residues Asp122 and 151 to 152; that span reads DL.

It belongs to the UPF0677 family.

Exhibits S-adenosyl-L-methionine-dependent methyltransferase activity. The polypeptide is Putative S-adenosyl-L-methionine-dependent methyltransferase MAB_4586c (Mycobacteroides abscessus (strain ATCC 19977 / DSM 44196 / CCUG 20993 / CIP 104536 / JCM 13569 / NCTC 13031 / TMC 1543 / L948) (Mycobacterium abscessus)).